The chain runs to 307 residues: S-methyl-5'-thioadenosine phosphorylase (307 aa).

Phosphate is bound by residues T20, 62–63 (RH), and 95–96 (SA). M197 contacts substrate. S198 contacts phosphate. Position 221–223 (221–223 (DYD)) interacts with substrate.

The protein belongs to the PNP/MTAP phosphorylase family. MTAP subfamily. As to quaternary structure, homotrimer.

The protein localises to the cytoplasm. It localises to the nucleus. The catalysed reaction is S-methyl-5'-thioadenosine + phosphate = 5-(methylsulfanyl)-alpha-D-ribose 1-phosphate + adenine. The protein operates within amino-acid biosynthesis; L-methionine biosynthesis via salvage pathway; S-methyl-5-thio-alpha-D-ribose 1-phosphate from S-methyl-5'-thioadenosine (phosphorylase route): step 1/1. Catalyzes the reversible phosphorylation of S-methyl-5'-thioadenosine (MTA) to adenine and 5-methylthioribose-1-phosphate. Involved in the breakdown of MTA, a major by-product of polyamine biosynthesis. Responsible for the first step in the methionine salvage pathway after MTA has been generated from S-adenosylmethionine. Has broad substrate specificity with 6-aminopurine nucleosides as preferred substrates. The chain is S-methyl-5'-thioadenosine phosphorylase from Fusarium vanettenii (strain ATCC MYA-4622 / CBS 123669 / FGSC 9596 / NRRL 45880 / 77-13-4) (Fusarium solani subsp. pisi).